A 163-amino-acid polypeptide reads, in one-letter code: Anthranilate 1,2-dioxygenase small subunit (163 aa).

The protein belongs to the bacterial ring-hydroxylating dioxygenase beta subunit family. As to quaternary structure, the anthranilate dioxygenase (AntDO) multicomponent enzyme system is composed of an oxygenase component and a NADH:acceptor reductase component (AntC). The oxygenase component is a heterohexamer of 3 large (AntA) and 3 small (AntB) subunits.

The enzyme catalyses anthranilate + NADH + O2 + 3 H(+) = catechol + NH4(+) + CO2 + NAD(+). It catalyses the reaction anthranilate + NADPH + O2 + 3 H(+) = catechol + NH4(+) + CO2 + NADP(+). It participates in aromatic compound metabolism; anthranilate degradation via hydroxylation; catechol from anthranilate: step 1/1. Its function is as follows. Component of anthranilate dioxygenase multicomponent enzyme system which catalyzes the incorporation of both atoms of molecular oxygen into anthranilate to form catechol. This chain is Anthranilate 1,2-dioxygenase small subunit, found in Acinetobacter baylyi (strain ATCC 33305 / BD413 / ADP1).